We begin with the raw amino-acid sequence, 239 residues long: Short palate, lung and nasal epithelium carcinoma-associated protein 2A (239 aa).

The first 20 residues, 1–20 (MVQLWKLVLLCGLLAGTSES), serve as a signal peptide directing secretion. Cys166 and Cys209 are oxidised to a cystine.

This sequence belongs to the BPI/LBP/Plunc superfamily. Plunc family. As to expression, detected in salivary tissues: parotid, submandibular and sublingual glands.

The protein localises to the secreted. This chain is Short palate, lung and nasal epithelium carcinoma-associated protein 2A (SPLUNC2A), found in Bos taurus (Bovine).